A 490-amino-acid chain; its full sequence is 2-succinylbenzoate--CoA ligase (490 aa).

It belongs to the ATP-dependent AMP-binding enzyme family. MenE subfamily.

It carries out the reaction 2-succinylbenzoate + ATP + CoA = 2-succinylbenzoyl-CoA + AMP + diphosphate. It participates in quinol/quinone metabolism; 1,4-dihydroxy-2-naphthoate biosynthesis; 1,4-dihydroxy-2-naphthoate from chorismate: step 5/7. Its pathway is quinol/quinone metabolism; menaquinone biosynthesis. Functionally, converts 2-succinylbenzoate (OSB) to 2-succinylbenzoyl-CoA (OSB-CoA). The chain is 2-succinylbenzoate--CoA ligase from Geobacillus kaustophilus (strain HTA426).